We begin with the raw amino-acid sequence, 158 residues long: Protein Smg homolog (158 aa).

This sequence belongs to the Smg family.

The polypeptide is Protein Smg homolog (Herminiimonas arsenicoxydans).